We begin with the raw amino-acid sequence, 732 residues long: Aldehyde oxidoreductase molybdenum-binding subunit PaoC (732 aa).

Residues 241-242 (GF), 468-470 (IGT), 511-512 (GA), 615-621 (RILNPKT), Q625, and 688-691 (KGVG) contribute to the Mo-molybdopterin cytosine dinucleotide site. E692 (proton acceptor) is an active-site residue.

It belongs to the xanthine dehydrogenase family. Heterotrimer composed of PaoA, PaoB and PaoC. Requires Mo-molybdopterin cytosine dinucleotide as cofactor.

It localises to the periplasm. The enzyme catalyses an aldehyde + A + H2O = a carboxylate + AH2 + H(+). In terms of biological role, oxidizes aldehydes to the corresponding carboxylic acids with a preference for aromatic aldehydes. It might play a role in the detoxification of aldehydes to avoid cell damage. The chain is Aldehyde oxidoreductase molybdenum-binding subunit PaoC from Escherichia coli O157:H7.